A 219-amino-acid polypeptide reads, in one-letter code: Poxin (219 aa).

Residue histidine 17 is the Proton donor of the active site. Tyrosine 138 (shared with catalytic histidine of dimeric partner) is an active-site residue. The Proton acceptor; shared with catalytic histidine of dimeric partner role is filled by lysine 142.

Belongs to the poxin family. As to quaternary structure, homodimer.

It carries out the reaction 2',3'-cGAMP + H2O = Gp(2'-5')Ap(3') + H(+). In terms of biological role, nuclease that is responsible for viral evasion of host cGAS-STING innate immunity. Cleaves 2',3'-cGAMP which is produced by host cGAS following recognition of cytosolic DNA and blocks the subsequent 2',3'-cGAMP-mediated activation of TMEM173/STING, which normally spreads to adjacent cells and activates the interferon and NF-kappa-B immune responses. This chain is Poxin (OPG188), found in Bos taurus (Bovine).